Reading from the N-terminus, the 136-residue chain is Large ribosomal subunit protein uL16 (136 aa).

It belongs to the universal ribosomal protein uL16 family. As to quaternary structure, part of the 50S ribosomal subunit.

In terms of biological role, binds 23S rRNA and is also seen to make contacts with the A and possibly P site tRNAs. This is Large ribosomal subunit protein uL16 from Shewanella pealeana (strain ATCC 700345 / ANG-SQ1).